The sequence spans 89 residues: Small ribosomal subunit protein uS15 (89 aa).

It belongs to the universal ribosomal protein uS15 family. In terms of assembly, part of the 30S ribosomal subunit. Forms a bridge to the 50S subunit in the 70S ribosome, contacting the 23S rRNA.

One of the primary rRNA binding proteins, it binds directly to 16S rRNA where it helps nucleate assembly of the platform of the 30S subunit by binding and bridging several RNA helices of the 16S rRNA. Its function is as follows. Forms an intersubunit bridge (bridge B4) with the 23S rRNA of the 50S subunit in the ribosome. The sequence is that of Small ribosomal subunit protein uS15 from Chlorobium chlorochromatii (strain CaD3).